Here is a 244-residue protein sequence, read N- to C-terminus: Phosphoadenosine 5'-phosphosulfate reductase (244 aa).

C239 functions as the Nucleophile; cysteine thiosulfonate intermediate in the catalytic mechanism.

This sequence belongs to the PAPS reductase family. CysH subfamily.

Its subcellular location is the cytoplasm. It carries out the reaction [thioredoxin]-disulfide + sulfite + adenosine 3',5'-bisphosphate + 2 H(+) = [thioredoxin]-dithiol + 3'-phosphoadenylyl sulfate. The protein operates within sulfur metabolism; hydrogen sulfide biosynthesis; sulfite from sulfate: step 3/3. In terms of biological role, catalyzes the formation of sulfite from phosphoadenosine 5'-phosphosulfate (PAPS) using thioredoxin as an electron donor. This Yersinia enterocolitica serotype O:8 / biotype 1B (strain NCTC 13174 / 8081) protein is Phosphoadenosine 5'-phosphosulfate reductase.